The sequence spans 395 residues: Teichoic acid D-alanyltransferase (395 aa).

Topologically, residues 1–6 (MTPYSS) are extracellular. The helical transmembrane segment at 7–26 (FLFFILLGILLLPTIILGLN) threads the bilayer. At 27–30 (GKRF) the chain is on the cytoplasmic side. The helical transmembrane segment at 31-46 (QAYNMFISIIILALIF) threads the bilayer. Over 47-50 (SHDL) the chain is Extracellular. The helical transmembrane segment at 51 to 76 (HGVIALCLFTIWQVLLISGYLAYRQK) threads the bilayer. The Cytoplasmic segment spans residues 77 to 79 (ANS). A helical membrane pass occupies residues 80 to 104 (GFVFCGAVIASILPLFLSKIWPFLS). Residues 105–120 (HPQPHHPPHNLISFLG) are Extracellular-facing. Residues 121–137 (ISYLTFKGVQLIMEARD) traverse the membrane as a helical segment. The Cytoplasmic segment spans residues 138–145 (GLLKEQLP). Residues 146–175 (LHRLLYFILFFPTISSGPIDRYRRFVKDEQ) lie within the membrane without spanning it. Over 176-179 (KAWT) the chain is Cytoplasmic. Residues 180-223 (KEEYADLLYTGIHKIFIGFLYKFIIGYAINTYFIMNLPAITHNK) form a helical membrane-spanning segment. Isoleucine 224 is a topological domain (extracellular). A helical transmembrane segment spans residues 225–256 (LGNLLYMYGYSMYLFFDFAGYTMFAVGVSYIM). Residues 257 to 266 (GIKSPENFNK) lie on the Cytoplasmic side of the membrane. The stretch at 267–303 (PFISKNIKDFWNRWHMSLSFWFRDYVFMRFVFWMTKK) is an intramembrane region. The Cytoplasmic segment spans residues 304–308 (KWIKN). The helical transmembrane segment at 309–328 (RMAVSNIGYFLLFMLMGVWH) threads the bilayer. Histidine 328 is an active-site residue. At 329-333 (GLAPQ) the chain is on the extracellular side. A helical membrane pass occupies residues 334–351 (YIIYGLYHAVLMTCYNFF). Residues 352-364 (EKWNKKYKWLPSN) lie on the Cytoplasmic side of the membrane. Residues 365-387 (RWTTILAIVITFHFVCFGFYIFS) form a helical membrane-spanning segment. Residues 388–395 (GKPFHHHH) are Extracellular-facing.

Belongs to the membrane-bound acyltransferase family.

The protein localises to the cell membrane. It functions in the pathway cell wall biogenesis; lipoteichoic acid biosynthesis. In terms of biological role, O-acyltransferase that catalyzes D-alanylation of both teichoic acid and lipoteichoic acid (LTA). D-alanylation of LTA plays an important role in modulating the properties of the cell wall in Gram-positive bacteria, influencing the net charge of the cell wall. Catalyzes D-alanylation from DltC carrier protein. The protein is Teichoic acid D-alanyltransferase of Bacillus subtilis (strain 168).